Here is a 200-residue protein sequence, read N- to C-terminus: MRTSHMLEQLMEALRCLPGVGPKSAQRMAFHLLQRDRKGGLQLADALSHAMTEIGHCNECRTFTEEDVCHICNNPKRQENGLLCVVESPADIAAVEATGQFSGRYFVLMGHLSPLDGIGPSDIGLDVLDYRLRRGDIKEVILATNPTVEGEATAHYIAELCREHKVDASRIAHGVPVGGELELVDGTTLSHSLLGRHKLN.

A C4-type zinc finger spans residues 57 to 72; the sequence is CNECRTFTEEDVCHIC. Positions 81-176 constitute a Toprim domain; it reads GLLCVVESPA…DASRIAHGVP (96 aa).

Belongs to the RecR family.

Functionally, may play a role in DNA repair. It seems to be involved in an RecBC-independent recombinational process of DNA repair. It may act with RecF and RecO. The sequence is that of Recombination protein RecR from Vibrio vulnificus (strain CMCP6).